A 290-amino-acid polypeptide reads, in one-letter code: Glycine--tRNA ligase alpha subunit (290 aa).

This sequence belongs to the class-II aminoacyl-tRNA synthetase family. Tetramer of two alpha and two beta subunits.

The protein localises to the cytoplasm. It catalyses the reaction tRNA(Gly) + glycine + ATP = glycyl-tRNA(Gly) + AMP + diphosphate. This Synechococcus sp. (strain CC9902) protein is Glycine--tRNA ligase alpha subunit.